The primary structure comprises 412 residues: Alpha-1-antitrypsin 1-3 (412 aa).

The N-terminal stretch at 1–24 (MTPSISWGLLLLAGLCCLVPSFLA) is a signal peptide. N-linked (GlcNAc...) asparagine glycosylation is found at Asn64, Asn101, and Asn265. The RCL stretch occupies residues 368–387 (AVTVLLAVPYSMPPILRFDH).

The protein belongs to the serpin family.

It is found in the secreted. Its function is as follows. Inhibitor of serine proteases. Can inhibit trypsin and chymotrypsin; relatively ineffective against elastase. In Mus musculus (Mouse), this protein is Alpha-1-antitrypsin 1-3 (Serpina1c).